Here is an 89-residue protein sequence, read N- to C-terminus: Small ribosomal subunit protein uS19 (89 aa).

The protein belongs to the universal ribosomal protein uS19 family.

Protein S19 forms a complex with S13 that binds strongly to the 16S ribosomal RNA. This is Small ribosomal subunit protein uS19 from Phocaeicola vulgatus (strain ATCC 8482 / DSM 1447 / JCM 5826 / CCUG 4940 / NBRC 14291 / NCTC 11154) (Bacteroides vulgatus).